A 276-amino-acid chain; its full sequence is NADPH-dependent 7-cyano-7-deazaguanine reductase (276 aa).

83–85 contacts substrate; the sequence is IES. 85–86 lines the NADPH pocket; it reads SK. C184 (thioimide intermediate) is an active-site residue. D191 (proton donor) is an active-site residue. 223–224 is a binding site for substrate; it reads HE. 252 to 253 lines the NADPH pocket; that stretch reads RG.

The protein belongs to the GTP cyclohydrolase I family. QueF type 2 subfamily. In terms of assembly, homodimer.

The protein resides in the cytoplasm. It catalyses the reaction 7-aminomethyl-7-carbaguanine + 2 NADP(+) = 7-cyano-7-deazaguanine + 2 NADPH + 3 H(+). Its pathway is tRNA modification; tRNA-queuosine biosynthesis. Its function is as follows. Catalyzes the NADPH-dependent reduction of 7-cyano-7-deazaguanine (preQ0) to 7-aminomethyl-7-deazaguanine (preQ1). The sequence is that of NADPH-dependent 7-cyano-7-deazaguanine reductase from Pseudomonas putida (strain W619).